Reading from the N-terminus, the 127-residue chain is Calcitonin receptor-stimulating peptide 1 (127 aa).

The signal sequence occupies residues 1–25 (MGFWKFSPFLVLGILALYQVGFLQA). A propeptide spanning residues 26-79 (APFRSALENPPDSGVRNEEELRLLLAAVMKDYMQMKTHELEQEQETEGSRVAVQ) is cleaved from the precursor. Residues Cys83 and Cys88 are joined by a disulfide bond.

The protein belongs to the calcitonin family.

Its subcellular location is the secreted. Its function is as follows. Stimulates cAMP production in porcine kidney cell line LLC-PK1 via the calcitonin receptor (CT) but not via the CT-like (CL) receptor. This is Calcitonin receptor-stimulating peptide 1 (CRSP1) from Canis lupus familiaris (Dog).